The following is a 353-amino-acid chain: Green-sensitive opsin-2 (353 aa).

Topologically, residues M1–V47 are extracellular. N29 is a glycosylation site (N-linked (GlcNAc...) asparagine). The helical transmembrane segment at Y48–A72 threads the bilayer. Topologically, residues T73 to N84 are cytoplasmic. The helical transmembrane segment at W85 to I110 threads the bilayer. The Extracellular portion of the chain corresponds to F111–E124. C121 and C198 form a disulfide bridge. A helical transmembrane segment spans residues G125 to W144. The Cytoplasmic segment spans residues E145–W163. Residues A164–S187 form a helical membrane-spanning segment. Residues R188–S213 are Extracellular-facing. A helical membrane pass occupies residues Y214–I241. Residues H242 to R263 are Cytoplasmic-facing. The helical transmembrane segment at M264–A287 threads the bilayer. Residues V288–H295 lie on the Extracellular side of the membrane. A helical transmembrane segment spans residues P296–M320. Position 307 is an N6-(retinylidene)lysine (K307). Residues N321–S353 lie on the Cytoplasmic side of the membrane.

Belongs to the G-protein coupled receptor 1 family. Opsin subfamily. The color pigments are found in the cone photoreceptor cells.

Its subcellular location is the membrane. Visual pigments are the light-absorbing molecules that mediate vision. They consist of an apoprotein, opsin, covalently linked to cis-retinal. The chain is Green-sensitive opsin-2 (G101) from Psalidodon fasciatus (Banded astyanax).